A 453-amino-acid chain; its full sequence is GTPase Der (453 aa).

EngA-type G domains are found at residues 3–167 (PIIV…ISEK) and 187–360 (IKVA…EDSK). GTP-binding positions include 9 to 16 (GRTNVGKS), 57 to 61 (DTAGL), 119 to 122 (NKID), 193 to 200 (GRPNVGKS), 240 to 244 (DTAGA), and 305 to 308 (NKCD). The KH-like domain maps to 361–445 (RKISTSTLIR…PIQIQFKDNE (85 aa)).

It belongs to the TRAFAC class TrmE-Era-EngA-EngB-Septin-like GTPase superfamily. EngA (Der) GTPase family. In terms of assembly, associates with the 50S ribosomal subunit.

GTPase that plays an essential role in the late steps of ribosome biogenesis. The polypeptide is GTPase Der (Buchnera aphidicola subsp. Acyrthosiphon pisum (strain Tuc7)).